The following is a 418-amino-acid chain: Tyrosine--tRNA ligase (418 aa).

Y38 provides a ligand contact to L-tyrosine. The 'HIGH' region motif lies at 43-52; it reads CTAKSLHVGS. Residues Y175 and Q179 each contribute to the L-tyrosine site. A 'KMSKS' region motif is present at residues 235 to 239; the sequence is KMGKT. K238 provides a ligand contact to ATP. The S4 RNA-binding domain maps to 348–413; sequence LPIIKLLQMC…CGKKRHLKVM (66 aa).

Belongs to the class-I aminoacyl-tRNA synthetase family. TyrS type 1 subfamily. As to quaternary structure, homodimer.

The protein localises to the cytoplasm. The enzyme catalyses tRNA(Tyr) + L-tyrosine + ATP = L-tyrosyl-tRNA(Tyr) + AMP + diphosphate + H(+). Catalyzes the attachment of tyrosine to tRNA(Tyr) in a two-step reaction: tyrosine is first activated by ATP to form Tyr-AMP and then transferred to the acceptor end of tRNA(Tyr). The protein is Tyrosine--tRNA ligase of Ehrlichia chaffeensis (strain ATCC CRL-10679 / Arkansas).